The sequence spans 1064 residues: Lysine-specific demethylase 4A (1064 aa).

The residue at position 2 (Ala2) is an N-acetylalanine. One can recognise a JmjN domain in the interval Ile14–Arg56. Tyr132 is a binding site for 2-oxoglutarate. The JmjC domain occupies Glu142–Cys308. Fe cation contacts are provided by His188 and Glu190. 2-oxoglutarate-binding residues include Asn198 and Lys206. Residues Cys234 and His240 each coordinate Zn(2+). Lys241 lines the 2-oxoglutarate pocket. Residue His276 coordinates Fe cation. Zn(2+) is bound by residues Cys306 and Cys308. 3 disordered regions span residues Glu358–Asp384, Phe501–Gly537, and Ser616–Gln642. The segment covering Glu366–Glu382 has biased composition (acidic residues). Residues Ser509–Ser532 are compositionally biased toward low complexity. Ser523 is subject to Phosphoserine. Positions Arg597–Lys638 are interaction with NCOR1. Positions Ser616 to Glu634 are enriched in acidic residues. Residues Met709 to Ser767 form a PHD-type 1 zinc finger. A C2HC pre-PHD-type zinc finger spans residues Glu772 to Ala805. The segment at Leu828 to Lys885 adopts a PHD-type 2 zinc-finger fold. 2 Tudor domains span residues Gln897–Phe954 and Gly955–Pro1011.

It belongs to the JHDM3 histone demethylase family. Interacts with histone deacetylase proteins HDAC1, HDAC2 and HDAC3. Interacts with RB and NCOR1. Interacts with VRK1. Requires Fe(2+) as cofactor. Post-translationally, ubiquitinated by RNF8 and RNF168, leading to its degradation. Degradation promotes accessibility of H4K20me2 mark for DNA repair protein TP53BP1, which is then recruited. Also ubiquitinated by the SCF(FBXO22) complex; leading to proteasomal degradation.

It localises to the nucleus. It carries out the reaction N(6),N(6),N(6)-trimethyl-L-lysyl(9)-[histone H3] + 2 2-oxoglutarate + 2 O2 = N(6)-methyl-L-lysyl(9)-[histone H3] + 2 formaldehyde + 2 succinate + 2 CO2. It catalyses the reaction N(6),N(6),N(6)-trimethyl-L-lysyl(36)-[histone H3] + 2 2-oxoglutarate + 2 O2 = N(6)-methyl-L-lysyl(36)-[histone H3] + 2 formaldehyde + 2 succinate + 2 CO2. In terms of biological role, histone demethylase that specifically demethylates 'Lys-9' and 'Lys-36' residues of histone H3, thereby playing a central role in histone code. Does not demethylate histone H3 'Lys-4', H3 'Lys-27' nor H4 'Lys-20'. Demethylates trimethylated H3 'Lys-9' and H3 'Lys-36' residue, while it has no activity on mono- and dimethylated residues. Demethylation of Lys residue generates formaldehyde and succinate. Participates in transcriptional repression of ASCL2 and E2F-responsive promoters via the recruitment of histone deacetylases and NCOR1, respectively. The polypeptide is Lysine-specific demethylase 4A (KDM4A) (Pongo abelii (Sumatran orangutan)).